The sequence spans 902 residues: Transcription factor FPSE_08121 (902 aa).

Residues 1 to 47 are disordered; the sequence is MVSPDNRPGTQGPSASAHAHDSRVPRKRPGSWDNNPSTAGNRAVKKR. Positions 52 to 81 form a DNA-binding region, zn(2)-C6 fungal-type; that stretch reads CVSCRDRKVRCDVVNGGPPCTNCRLDDVDC. 4 disordered regions span residues 92-189, 208-234, 258-277, and 820-839; these read NPAR…EAEQ, HCEQ…PANP, ATEA…SANT, and TGVA…PNMT. The span at 120-137 shows a compositional bias: low complexity; sequence TDADTAAPGPAPGSASAT. Residues 168–177 show a composition bias toward acidic residues; the sequence is ETICDDDENE. Polar residues-rich tracts occupy residues 178–187, 220–234, 262–277, and 826–839; these read NNSWHNQQEA, GAAT…PANP, PPSS…SANT, and GQRS…PNMT.

It is found in the nucleus. Functionally, transcription factor; part of the Fusarium detoxification of benzoxazolinone cluster involved in the degradation of benzoxazolinones produced by the host plant. Maize, wheat, and rye produce the 2 benzoxazinone phytoanticipins 2,4-dihy-droxy-7-methoxy-1,4-benzoxazin-3-one (DIMBOA) and 2,4-dihydroxy-1,4-benzoxazin-3-one (DIBOA) that, due to their inherent instability once released, spontaneously degrade to the more stable corresponding benzoxazolinones, 6-methoxy-2-benzoxazolinone (MBOA) and 2-benzoxazolinone (BOA), respectively. FPSE_08121 positively regulates the expression of the FBD cluster gene FPSE_08120 in response to 2-aminophenol (2-AP) treatment and contributes quantitatively to benzoxazolinone tolerance. This is Transcription factor FPSE_08121 from Fusarium pseudograminearum (strain CS3096) (Wheat and barley crown-rot fungus).